Here is a 418-residue protein sequence, read N- to C-terminus: Tyrosine--tRNA ligase (418 aa).

The 'HIGH' region signature appears at 42–51 (PTAPDLHLGH). The 'KMSKS' region signature appears at 226–230 (KMSKS). K229 contacts ATP. In terms of domain architecture, S4 RNA-binding spans 339 to 400 (VRLVALLTKS…GKRNFAKVRL (62 aa)).

Belongs to the class-I aminoacyl-tRNA synthetase family. TyrS type 2 subfamily. Homodimer.

It is found in the cytoplasm. It catalyses the reaction tRNA(Tyr) + L-tyrosine + ATP = L-tyrosyl-tRNA(Tyr) + AMP + diphosphate + H(+). Catalyzes the attachment of tyrosine to tRNA(Tyr) in a two-step reaction: tyrosine is first activated by ATP to form Tyr-AMP and then transferred to the acceptor end of tRNA(Tyr). The sequence is that of Tyrosine--tRNA ligase from Xylella fastidiosa (strain 9a5c).